A 397-amino-acid polypeptide reads, in one-letter code: Ribosomal RNA processing protein 1 homolog (397 aa).

Positions 334–343 are enriched in basic and acidic residues; it reads EAAEAARQEN. Residues 334–366 are disordered; it reads EAAEAARQENGDDVPDDEIAEVKKGNGKKTAVP.

This sequence belongs to the RRP1 family.

The protein resides in the nucleus. In terms of biological role, may be involved in the generation of 28S rRNA. This chain is Ribosomal RNA processing protein 1 homolog, found in Caenorhabditis elegans.